A 642-amino-acid chain; its full sequence is Kinesin-like protein KIN-7L (642 aa).

The Kinesin motor domain occupies 3 to 337 (KISVAVRFRP…LQFASRAKCV (335 aa)). Low complexity predominate over residues 12–27 (PPTTAAPAADQSPSST). A disordered region spans residues 12 to 33 (PPTTAAPAADQSPSSTGGDREW). 94-101 (GQTSSGKT) is a binding site for ATP. Coiled coils occupy residues 343 to 428 (VNEI…SNTS) and 540 to 612 (RQQL…FSQA).

The protein belongs to the TRAFAC class myosin-kinesin ATPase superfamily. Kinesin family. KIN-7 subfamily.

The chain is Kinesin-like protein KIN-7L from Oryza sativa subsp. japonica (Rice).